The chain runs to 1492 residues: Putative leucine-rich repeat-containing protein DDB_G0290503 (1492 aa).

The PH domain occupies 2–111; that stretch reads SILLEGYLEK…WIEGIKDAIK (110 aa). LRR repeat units follow at residues 123 to 144, 180 to 204, 258 to 284, 329 to 351, 352 to 375, 389 to 413, 439 to 462, 519 to 543, 551 to 575, 579 to 603, 632 to 656, 728 to 752, 806 to 830, 831 to 855, 895 to 919, 927 to 951, 955 to 979, 1013 to 1036, 1044 to 1068, 1138 to 1164, and 1210 to 1232; these read LDGL…IKHL, IKSL…VEKL, QESL…QFEK, KNQF…SIVD, DKLK…EIDN, ISKI…SIDK, LEKL…ILEI, INEL…NQSS, LNQL…IIER, IDQL…NESS, LDEL…NQSS, LKSL…NQDS, INEL…NESS, LIQL…IIER, LNQL…NQSS, NEKL…NESL, FENL…IIDV, LQDL…ELKE, and NAHL…GFNE. Residues 1272–1292 form a disordered region; that stretch reads RSSSSSLHQQQQMISPDLSNS. Residues 1274–1286 show a composition bias toward low complexity; it reads SSSSLHQQQQMIS. 2 LRR repeats span residues 1424–1444 and 1445–1468; these read SSEK…KYFF and AIAR…IFDM.

The protein is Putative leucine-rich repeat-containing protein DDB_G0290503 of Dictyostelium discoideum (Social amoeba).